The sequence spans 419 residues: Histone acetyltransferase type B catalytic subunit (419 aa).

At Ala2 the chain carries N-acetylalanine. N6-acetyllysine occurs at positions 9 and 15. An interaction with histone H4 N-terminus region spans residues 62 to 64 (DDE). Ser190 carries the post-translational modification Phosphoserine; by AMPK. Residues 225–227 (YNY) are interaction with histone H4 N-terminus. Acetyl-CoA is bound by residues 241–243 (MLI) and 248–254 (QGQGHGA). Catalysis depends on Glu276, which acts as the Proton donor/acceptor. Ser343 carries the phosphoserine modification.

The protein belongs to the HAT1 family. As to quaternary structure, catalytic subunit of the type B histone acetyltransferase (HAT) complex, composed of RBBP7 and HAT1. Interacts with histones H4 and H2A. The interaction is dependent of the ability of RBBP7 to bind to the N-terminus of histones. Component of the histone H3.1 and H3.3 complexes. In terms of processing, phosphorylated by AMPK at Ser-190; phosphorylation increases HAT1 activity.

The protein localises to the nucleus matrix. It is found in the mitochondrion. Its subcellular location is the cytoplasm. The protein resides in the nucleus. It localises to the nucleoplasm. The catalysed reaction is L-lysyl-[protein] + acetyl-CoA = N(6)-acetyl-L-lysyl-[protein] + CoA + H(+). In terms of biological role, histone acetyltransferase that plays a role in different biological processes including cell cycle progression, glucose metabolism, histone production or DNA damage repair. Coordinates histone production and acetylation via H4 promoter binding. Acetylates histone H4 at 'Lys-5' (H4K5ac) and 'Lys-12' (H4K12ac) and, to a lesser extent, histone H2A at 'Lys-5' (H2AK5ac). Drives H4 production by chromatin binding to support chromatin replication and acetylation. Since transcription of H4 genes is tightly coupled to S-phase, plays an important role in S-phase entry and progression. Promotes homologous recombination in DNA repair by facilitating histone turnover and incorporation of acetylated H3.3 at sites of double-strand breaks. In addition, acetylates other substrates such as chromatin-related proteins. Also acetylates RSAD2 which mediates the interaction of ubiquitin ligase UBE4A with RSAD2 leading to RSAD2 ubiquitination and subsequent degradation. (Microbial infection) Contributes to hepatitis B virus (HBV) replication by acetylating histone H4 at the sites of 'Lys-5' and 'Lys-12' on the covalently closed circular DNA (cccDNA) minichromosome leading to its accumulation within the host cell. This is Histone acetyltransferase type B catalytic subunit (HAT1) from Homo sapiens (Human).